The sequence spans 159 residues: uncharacterized protein (159 aa).

This is an uncharacterized protein from Methanocaldococcus jannaschii (strain ATCC 43067 / DSM 2661 / JAL-1 / JCM 10045 / NBRC 100440) (Methanococcus jannaschii).